Here is a 369-residue protein sequence, read N- to C-terminus: 3-dehydroquinate synthase (369 aa).

NAD(+) contacts are provided by residues 75 to 80, 109 to 113, 133 to 134, Lys146, Lys155, and 173 to 176; these read DGEEHK, GVIGD, TT, and TLKT. Zn(2+) is bound by residues Glu188, His251, and His268.

It belongs to the sugar phosphate cyclases superfamily. Dehydroquinate synthase family. It depends on Co(2+) as a cofactor. The cofactor is Zn(2+). NAD(+) is required as a cofactor.

It localises to the cytoplasm. It carries out the reaction 7-phospho-2-dehydro-3-deoxy-D-arabino-heptonate = 3-dehydroquinate + phosphate. Its pathway is metabolic intermediate biosynthesis; chorismate biosynthesis; chorismate from D-erythrose 4-phosphate and phosphoenolpyruvate: step 2/7. Functionally, catalyzes the conversion of 3-deoxy-D-arabino-heptulosonate 7-phosphate (DAHP) to dehydroquinate (DHQ). The protein is 3-dehydroquinate synthase of Legionella pneumophila subsp. pneumophila (strain Philadelphia 1 / ATCC 33152 / DSM 7513).